We begin with the raw amino-acid sequence, 465 residues long: Cysteine--tRNA ligase (465 aa).

A Zn(2+)-binding site is contributed by C30. A 'HIGH' region motif is present at residues 32 to 42 (ITVYDYCHVGH). Positions 214, 239, and 243 each coordinate Zn(2+). Residues 271–275 (KMSKS) carry the 'KMSKS' region motif. K274 provides a ligand contact to ATP.

The protein belongs to the class-I aminoacyl-tRNA synthetase family. As to quaternary structure, monomer. The cofactor is Zn(2+).

It is found in the cytoplasm. It carries out the reaction tRNA(Cys) + L-cysteine + ATP = L-cysteinyl-tRNA(Cys) + AMP + diphosphate. This Burkholderia orbicola (strain MC0-3) protein is Cysteine--tRNA ligase.